Here is a 374-residue protein sequence, read N- to C-terminus: Type IV secretion system protein PtlG homolog (374 aa).

A helical transmembrane segment spans residues 38-56 (WMFALVAVALSCLLATGIW). The tract at residues 86–117 (HPREPEPAPLPDMPAAPDPILPQPRPAPPVPP) is disordered. Residues 92–117 (PAPLPDMPAAPDPILPQPRPAPPVPP) show a composition bias toward pro residues.

It belongs to the TrbI/VirB10 family.

The protein resides in the cell membrane. This Bordetella bronchiseptica (strain ATCC BAA-588 / NCTC 13252 / RB50) (Alcaligenes bronchisepticus) protein is Type IV secretion system protein PtlG homolog (ptlG).